Consider the following 310-residue polypeptide: Metal ABC transporter substrate-binding lipoprotein ScbA (310 aa).

The first 19 residues, Met1–Ala19, serve as a signal peptide directing secretion. Cys20 carries the N-palmitoyl cysteine lipid modification. The S-diacylglycerol cysteine moiety is linked to residue Cys20. A divalent metal cation is bound by residues His68, His140, Glu206, and Asp281.

It belongs to the bacterial solute-binding protein 9 family.

The protein localises to the cell membrane. Part of an ATP-binding cassette (ABC) transport system involved in metal import. Binds a metal with high affinity and specificity and delivers it to the membrane permease for translocation into the cytoplasm. Part of an ATP-driven transport system for manganese. Does not exhibit adhesion properties. The sequence is that of Metal ABC transporter substrate-binding lipoprotein ScbA (scbA) from Streptococcus cristatus.